The following is a 121-amino-acid chain: Large ribosomal subunit protein eL18 (121 aa).

The protein belongs to the eukaryotic ribosomal protein eL18 family.

The polypeptide is Large ribosomal subunit protein eL18 (Methanosphaerula palustris (strain ATCC BAA-1556 / DSM 19958 / E1-9c)).